A 390-amino-acid chain; its full sequence is Putative 8-amino-7-oxononanoate synthase (390 aa).

R19 contacts substrate. 105–106 (GY) provides a ligand contact to pyridoxal 5'-phosphate. H130 provides a ligand contact to substrate. Pyridoxal 5'-phosphate-binding positions include S177, 202-205 (DEAH), and 234-237 (TFSK). N6-(pyridoxal phosphate)lysine is present on K237. Substrate is bound at residue T351.

Belongs to the class-II pyridoxal-phosphate-dependent aminotransferase family. BioF subfamily. Homodimer. Requires pyridoxal 5'-phosphate as cofactor.

The catalysed reaction is 6-carboxyhexanoyl-[ACP] + L-alanine + H(+) = (8S)-8-amino-7-oxononanoate + holo-[ACP] + CO2. The protein operates within cofactor biosynthesis; biotin biosynthesis. In terms of biological role, catalyzes the decarboxylative condensation of pimeloyl-[acyl-carrier protein] and L-alanine to produce 8-amino-7-oxononanoate (AON), [acyl-carrier protein], and carbon dioxide. The protein is Putative 8-amino-7-oxononanoate synthase (bioF) of Geobacillus kaustophilus (strain HTA426).